The primary structure comprises 164 residues: Sorting nexin-3 (164 aa).

Positions 40–163 constitute a PX domain; that stretch reads EIEVCNPKTH…VRFIQDPTFQ (124 aa). Positions 83, 85, 114, 120, and 129 each coordinate a 1,2-diacyl-sn-glycero-3-phospho-(1D-myo-inositol-3-phosphate).

The protein belongs to the sorting nexin family.

It is found in the cytoplasm. The protein localises to the golgi apparatus membrane. Its subcellular location is the prevacuolar compartment membrane. Functionally, required for retention of late Golgi membrane proteins. Component of the retrieval machinery that functions by direct interaction with the cytosolic tails of certain TGN membrane proteins during the sorting/budding process at the prevacuolar compartment. Binds phosphatidylinositol 3-phosphate (PtdIns(P3)). In Kluyveromyces lactis (strain ATCC 8585 / CBS 2359 / DSM 70799 / NBRC 1267 / NRRL Y-1140 / WM37) (Yeast), this protein is Sorting nexin-3 (SNX3).